The sequence spans 92 residues: Long neurotoxin 3FTx-Oxy1 (92 aa).

An N-terminal signal peptide occupies residues 1-21; the sequence is MKTLLLTLVVVTIVCLDLGYT. Intrachain disulfides connect Cys24–Cys42, Cys35–Cys63, Cys48–Cys52, Cys67–Cys79, and Cys80–Cys85.

It belongs to the three-finger toxin family. Long-chain subfamily. Type II alpha-neurotoxin sub-subfamily. In terms of tissue distribution, expressed by the venom gland.

It localises to the secreted. Binds with high affinity to muscular (alpha-1/CHRNA1) and neuronal (alpha-7/CHRNA7) nicotinic acetylcholine receptor (nAChR) and inhibits acetylcholine from binding to the receptor, thereby impairing neuromuscular and neuronal transmission. The polypeptide is Long neurotoxin 3FTx-Oxy1 (Oxyuranus microlepidotus (Inland taipan)).